The following is a 355-amino-acid chain: Phytoene synthase (355 aa).

It belongs to the phytoene/squalene synthase family. ATP serves as cofactor. Requires Mn(2+) as cofactor. The cofactor is Mg(2+).

The protein operates within carotenoid biosynthesis; phytoene biosynthesis. In terms of biological role, involved in the biosynthesis of carotenoids. Catalyzes the condensation of two molecules of geranylgeranyl diphosphate (GGPP) to give prephytoene diphosphate (PPPP) and the subsequent rearrangement of the cyclopropylcarbinyl intermediate to yield phytoene. This chain is Phytoene synthase (crtB), found in Cereibacter sphaeroides (strain ATCC 17023 / DSM 158 / JCM 6121 / CCUG 31486 / LMG 2827 / NBRC 12203 / NCIMB 8253 / ATH 2.4.1.) (Rhodobacter sphaeroides).